The chain runs to 523 residues: NADP-specific glutamate dehydrogenase (523 aa).

Residues 26–50 (CARGRSAKRDVAAKRLRSRSPRMDA) are disordered. Lysine 202 is a catalytic residue.

The protein belongs to the Glu/Leu/Phe/Val dehydrogenases family. As to quaternary structure, homo- and heterohexamer of alpha and beta subunits. Both subunits are encoded by the same gene. In terms of processing, the N-termini of the alpha and the beta chains are blocked.

The protein resides in the plastid. It is found in the chloroplast. It catalyses the reaction L-glutamate + NADP(+) + H2O = 2-oxoglutarate + NH4(+) + NADPH + H(+). This chain is NADP-specific glutamate dehydrogenase, found in Chlorella sorokiniana (Freshwater green alga).